The primary structure comprises 217 residues: AFG2-interacting ribosome maturation factor (217 aa).

In terms of assembly, part of the 55LCC heterohexameric ATPase complex composed at least of AIRIM, AFG2A, AFG2B and CINP. Does not associate with pre-60S ribosomal particles. Post-translationally, phosphorylated on serines by CK2 kinase.

Its subcellular location is the nucleus. It is found in the cytoplasm. Part of the 55LCC heterohexameric ATPase complex which is chromatin-associated and promotes replisome proteostasis to maintain replication fork progression and genome stability. Required for replication fork progression, sister chromatid cohesion, and chromosome stability. The ATPase activity is specifically enhanced by replication fork DNA and is coupled to cysteine protease-dependent cleavage of replisome substrates in response to replication fork damage. Uses ATPase activity to process replisome substrates in S-phase, facilitating their proteolytic turnover from chromatin to ensure DNA replication and mitotic fidelity. Involved in the cytoplasmic maturation steps of pre-60S ribosomal particles by promoting the release of shuttling protein RSL24D1/RLP24 from the pre-ribosomal particles. The protein is AFG2-interacting ribosome maturation factor (Airim) of Mus musculus (Mouse).